The primary structure comprises 60 residues: MPPTRKISIRLTEKYYTKLELLVESGEFTSVSEAVREAVKLLLEKYKEQLESIAQMDTYR.

This is an uncharacterized protein from Archaeoglobus fulgidus (strain ATCC 49558 / DSM 4304 / JCM 9628 / NBRC 100126 / VC-16).